Reading from the N-terminus, the 81-residue chain is U-poneritoxin(01)-Om6a (81 aa).

A signal peptide spans 1 to 21 (MRRSYVLLAFAIVLIISIISA). A propeptide spanning residues 22–43 (QVEADASSDAFADAVADAVADP) is cleaved from the precursor. Ala79 carries the alanine amide modification.

Belongs to the formicidae venom precursor-01 superfamily. Post-translationally, truncated sequences of this peptide have also been found in the venom. It is possible they have been cleaved in the venom. Expressed by the venom gland.

Its subcellular location is the secreted. In terms of biological role, cationic amphipathic alpha-helical peptide with antimicrobial activities against E.coli (MIC=3.1), and S.aureus (MIC=3.1 uM). Also shows histamine-releasing activity (33.6% at 10 uM). Does not have activity against S.cerevisiae. Does not show hemolytic activity, even at 50 uM. The polypeptide is U-poneritoxin(01)-Om6a (Odontomachus monticola (Trap-jaw ant)).